A 165-amino-acid polypeptide reads, in one-letter code: Xanthine-guanine phosphoribosyltransferase (165 aa).

Residues 41 to 42 (RG) and 98 to 106 (DDLTDTGKT) contribute to the 5-phospho-alpha-D-ribose 1-diphosphate site. Position 99 (Asp99) interacts with Mg(2+). Guanine contacts are provided by Asp102 and Ile145. Residues Asp102 and Ile145 each contribute to the xanthine site. GMP is bound by residues 102-106 (DTGKT) and 144-145 (WI).

Belongs to the purine/pyrimidine phosphoribosyltransferase family. XGPT subfamily. As to quaternary structure, homotetramer. Requires Mg(2+) as cofactor.

The protein localises to the cell inner membrane. It catalyses the reaction GMP + diphosphate = guanine + 5-phospho-alpha-D-ribose 1-diphosphate. The enzyme catalyses XMP + diphosphate = xanthine + 5-phospho-alpha-D-ribose 1-diphosphate. The catalysed reaction is IMP + diphosphate = hypoxanthine + 5-phospho-alpha-D-ribose 1-diphosphate. The protein operates within purine metabolism; GMP biosynthesis via salvage pathway; GMP from guanine: step 1/1. It functions in the pathway purine metabolism; XMP biosynthesis via salvage pathway; XMP from xanthine: step 1/1. Purine salvage pathway enzyme that catalyzes the transfer of the ribosyl-5-phosphate group from 5-phospho-alpha-D-ribose 1-diphosphate (PRPP) to the N9 position of the 6-oxopurines guanine and xanthine to form the corresponding ribonucleotides GMP (guanosine 5'-monophosphate) and XMP (xanthosine 5'-monophosphate), with the release of PPi. To a lesser extent, also acts on hypoxanthine. The protein is Xanthine-guanine phosphoribosyltransferase of Chelativorans sp. (strain BNC1).